Here is a 341-residue protein sequence, read N- to C-terminus: Fructose-1,6-bisphosphatase, cytosolic (341 aa).

4 residues coordinate Mg(2+): Glu-100, Asp-121, Leu-123, and Asp-124. Substrate-binding positions include Asp-124–Ser-127, Asn-215, Tyr-247, Tyr-267, and Lys-277. Glu-283 contacts Mg(2+).

This sequence belongs to the FBPase class 1 family. The cofactor is Mg(2+).

The protein resides in the cytoplasm. It catalyses the reaction beta-D-fructose 1,6-bisphosphate + H2O = beta-D-fructose 6-phosphate + phosphate. The polypeptide is Fructose-1,6-bisphosphatase, cytosolic (FBPban1) (Musa acuminata (Banana)).